Consider the following 725-residue polypeptide: Beta-adducin (725 aa).

The disordered stretch occupies residues 1-22 (MSEDTVPEAASPPPSQGQHYFD). 2 positions are modified to phosphoserine: serine 11 and serine 25. Threonine 55 is subject to Phosphothreonine. Serine 60 and serine 344 each carry phosphoserine. Positions 425-444 (KQQKEKTRWLNTPNTYLRVN) are interaction with calmodulin. Positions 525 to 725 (AEKSRSPSTE…KSKKKEKVES (201 aa)) are disordered. 2 positions are modified to phosphoserine: serine 530 and serine 532. Threonine 533 bears the Phosphothreonine mark. Serine 535 is modified (phosphoserine). Residue threonine 561 is modified to Phosphothreonine. The segment covering 566–588 (EEYKKEVERKKLEQEQEGEKDAA) has biased composition (basic and acidic residues). A phosphoserine mark is found at serine 594, serine 598, serine 602, and serine 606. Polar residues predominate over residues 596-621 (VKSTPASPVQSPTRAGTKSPAVSPSK). Threonine 612 is subject to Phosphothreonine. A phosphoserine mark is found at serine 614, serine 618, and serine 620. Basic and acidic residues-rich tracts occupy residues 622–631 (ASEDAKKTEV) and 639–654 (EPEK…KEEE). Threonine 674 bears the Phosphothreonine mark. Serine 678, serine 685, serine 688, serine 692, serine 696, serine 698, serine 700, serine 702, and serine 712 each carry phosphoserine. Residues 687–700 (TSGPLSPEGSPSKS) show a composition bias toward low complexity. The segment covering 701-725 (PSKKKKKFRTPSFLKKSKKKEKVES) has biased composition (basic residues). The interval 703–720 (KKKKKFRTPSFLKKSKKK) is interaction with calmodulin.

It belongs to the aldolase class II family. Adducin subfamily. Heterodimer of an alpha and a beta subunit. Found in a complex with ADD2, DMTN and SLC2A1. Interacts with SLC2A1. In terms of tissue distribution, found in liver, kidney, spleen, heart and brain.

The protein localises to the cytoplasm. It is found in the cytoskeleton. The protein resides in the cell membrane. Its function is as follows. Membrane-cytoskeleton-associated protein that promotes the assembly of the spectrin-actin network. Binds to the erythrocyte membrane receptor SLC2A1/GLUT1 and may therefore provide a link between the spectrin cytoskeleton to the plasma membrane. Binds to calmodulin. Calmodulin binds preferentially to the beta subunit. The sequence is that of Beta-adducin (Add2) from Rattus norvegicus (Rat).